The sequence spans 423 residues: Phytoene synthase, chloroplastic (423 aa).

A chloroplast-targeting transit peptide spans 1-136 (MVVAILRVVS…DAYDRCGEVC (136 aa)).

The protein belongs to the phytoene/squalene synthase family. As to quaternary structure, monomer.

The protein localises to the plastid. Its subcellular location is the chloroplast. The enzyme catalyses 2 (2E,6E,10E)-geranylgeranyl diphosphate = 15-cis-phytoene + 2 diphosphate. It participates in carotenoid biosynthesis; phytoene biosynthesis; all-trans-phytoene from geranylgeranyl diphosphate: step 1/1. Its function is as follows. Catalyzes the reaction from prephytoene diphosphate to phytoene. The protein is Phytoene synthase, chloroplastic (PSY) of Narcissus pseudonarcissus (Daffodil).